Reading from the N-terminus, the 370-residue chain is Acyl-CoA:lysophosphatidylglycerol acyltransferase 1 (370 aa).

The chain crosses the membrane as a helical span at residues 22 to 42 (FAFMVVNNLVAIPSYICYVII). The HXXXXD motif motif lies at 101–106 (HQATGD). The helical transmembrane segment at 342 to 362 (LWIFLIQSFAFLSGYMWYNII) threads the bilayer.

It belongs to the 1-acyl-sn-glycerol-3-phosphate acyltransferase family. In terms of tissue distribution, highly expressed in liver and placenta. Also expressed in peripheral blood, lung, kidney and brain. Detected at lower levels in colon. High expression is detected in brain and testis.

It is found in the endoplasmic reticulum membrane. The catalysed reaction is a 2-acyl-sn-glycero-3-phosphoethanolamine + octadecanoyl-CoA = 1-octadecanoyl-2-acyl-sn-glycero-3-phosphoethanolamine + CoA. It catalyses the reaction 2-(9Z-octadecenoyl)-sn-glycero-3-phosphoethanolamine + octadecanoyl-CoA = 1-octadecanoyl-2-(9Z-octadecenoyl)-sn-glycero-3-phosphoethanolamine + CoA. It carries out the reaction a 2-acyl-sn-glycero-3-phosphoethanolamine + hexadecanoyl-CoA = 1-hexadecanoyl-2-acyl-sn-glycero-3-phosphoethanolamine + CoA. The enzyme catalyses 2-(9Z-octadecenoyl)-sn-glycero-3-phosphoethanolamine + hexadecanoyl-CoA = 1-hexadecanoyl-2-(9Z-octadecenoyl)-sn-glycero-3-phosphoethanolamine + CoA. The catalysed reaction is 1-tetradecanoyl-sn-glycero-3-phospho-(1'-sn-glycerol) + hexadecanoyl-CoA = 1-tetradecanoyl-2-hexadecanoyl-sn-glycero-3-phospho-(1'-sn-glycerol) + CoA. It catalyses the reaction 1-hexadecanoyl-sn-glycero-3-phospho-(1'-sn-glycerol) + dodecanoyl-CoA = 1-hexadecanoyl-2-dodecanoyl-sn-glycero-3-phospho-(1'-sn-glycerol) + CoA. It carries out the reaction 1-hexadecanoyl-sn-glycero-3-phospho-(1'-sn-glycerol) + hexadecanoyl-CoA = 1,2-dihexadecanoyl-sn-glycero-3-phospho-(1'-sn-glycerol) + CoA. The enzyme catalyses 1-hexadecanoyl-sn-glycero-3-phospho-(1'-sn-glycerol) + octadecanoyl-CoA = 1-hexadecanoyl-2-octadecanoyl-sn-glycero-3-phospho-(1'-sn-glycerol) + CoA. The catalysed reaction is 1-octadecanoyl-sn-glycero-3-phospho-(1'-sn-glycerol) + hexadecanoyl-CoA = 1-octadecanoyl-2-hexadecanoyl-sn-glycero-3-phospho-(1'-sn-glycerol) + CoA. It catalyses the reaction 1-(9Z-octadecenoyl)-sn-glycero-3-phospho-(1'-sn-glycerol) + dodecanoyl-CoA = 1-(9Z-octadecenoyl)-2-dodecanoyl-sn-glycero-3-phospho-(1'-sn-glycerol) + CoA. It carries out the reaction 1-hexadecanoyl-sn-glycero-3-phospho-(1'-sn-glycerol) + (9Z)-octadecenoyl-CoA = 1-hexadecanoyl-2-(9Z-octadecenoyl)-sn-glycero-3-phospho-(1'-sn-glycerol) + CoA. The enzyme catalyses 1-(9Z-octadecenoyl)-sn-glycero-3-phospho-(1'-sn-glycerol) + hexadecanoyl-CoA = 1-(9Z-octadecenoyl)-2-hexadecanoyl-sn-glycero-3-phospho-(1'-sn-glycerol) + CoA. The catalysed reaction is 1-(9Z-octadecenoyl)-sn-glycero-3-phospho-(1'-sn-glycerol) + (9Z)-octadecenoyl-CoA = 1,2-di-(9Z-octadecenoyl)-sn-glycero-3-phospho-(1'-sn-glycerol) + CoA. It catalyses the reaction a 2-acylglycerol + an acyl-CoA = a 1,2-diacylglycerol + CoA. It carries out the reaction a 2-acylglycerol + hexadecanoyl-CoA = a 1-hexadecanoyl-2-acylglycerol + CoA. The enzyme catalyses a 1-acylglycerol + hexadecanoyl-CoA = an hexadecanoyl-acylglycerol + CoA. The catalysed reaction is a 2-acyl-sn-glycero-3-phosphocholine + an acyl-CoA = a 1,2-diacyl-sn-glycero-3-phosphocholine + CoA. It catalyses the reaction 2-(9Z-octadecenoyl)-sn-glycero-3-phosphocholine + octadecanoyl-CoA = 1-octadecanoyl-2-(9Z-octadecenoyl)-sn-glycero-3-phosphocholine + CoA. It carries out the reaction 2-(9Z,12Z-octadecadienoyl)-sn-glycero-3-phosphocholine + octadecanoyl-CoA = 1-octadecanoyl-2-(9Z,12Z)-octadecadienoyl-sn-glycero-3-phosphocholine + CoA. The enzyme catalyses 2-(5Z,8Z,11Z,14Z)-eicosatetraenoyl-sn-glycero-3-phosphocholine + octadecanoyl-CoA = 1-octadecanoyl-2-(5Z,8Z,11Z,14Z-eicosatetraenoyl)-sn-glycero-3-phosphocholine + CoA. The catalysed reaction is 2-(9Z-octadecenoyl)-sn-glycero-3-phosphocholine + hexadecanoyl-CoA = 1-hexadecanoyl-2-(9Z-octadecenoyl)-sn-glycero-3-phosphocholine + CoA. It catalyses the reaction 2-(9Z-octadecenoyl)-sn-glycero-3-phospho-L-serine + hexadecanoyl-CoA = 1-hexadecanoyl-2-(9Z-octadecenoyl)-sn-glycero-3-phospho-L-serine + CoA. It carries out the reaction 2-(4Z,7Z,10Z,13Z,16Z,19Z-docosahexaenoyl)-sn-glycero-3-phosphocholine + octadecanoyl-CoA = 1-octadecanoyl-2-(4Z,7Z,10Z,13Z,16Z,19Z-docosahexaenoyl)-sn-glycero-3-phosphocholine + CoA. The enzyme catalyses 1-(9Z-octadecenoyl)-sn-glycero-3-phospho-L-serine + octadecanoyl-CoA = 1-(9Z-octadecenoyl)-2-octadecanoyl-sn-glycero-3-phospho-L-serine + CoA. The catalysed reaction is a 2-acyl-sn-glycero-3-phosphoethanolamine + a fatty acyl-CoA = a 1,2-diacyl-sn-glycero-3-phosphoethanolamine + CoA. Lysophospholipid acyltransferase involved in fatty acyl chain remodeling of glycerophospholipids in the endoplasmic reticulum membrane. Selectively catalyzes the transfer and esterification of saturated long-chain fatty acids from acyl-CoA to the sn-1 position of 1-lyso-2-acyl phosphatidylethanolamines (1-lyso-PE, LPE), with a preference for stearoyl CoA over palmitoyl CoA as acyl donor. Acts in concert with an unknown phospholipase A1 to convert palmitate phosphatidylethanolamine (PE) species into stearate ones. Provides substrates to the PE methylation pathway, controlling stearate/palmitate composition of PE and phosphatidylcholine (PC) species with an overall impact on de novo hepatic lipid synthesis, body fat content and life span. Can acylate lysophosphatidylglycerols (LPG) using various saturated fatty acyl-CoAs as acyl donors. Can also acylate monoacylglycerols with a preference for 2-monoacylglycerols over 1-monoacylglycerols. Has no activity toward lysophosphatidic acids (LPA). This chain is Acyl-CoA:lysophosphatidylglycerol acyltransferase 1, found in Homo sapiens (Human).